Consider the following 317-residue polypeptide: 2-oxoglutarate and iron-dependent oxygenase domain-containing protein 3 (317 aa).

Residues 1-34 form a disordered region; the sequence is MATRHRRRGGSAPSWAKPGKPGERPGGPKKSRGR. Topologically, residues 1-39 are cytoplasmic; it reads MATRHRRRGGSAPSWAKPGKPGERPGGPKKSRGRTSWKS. Residues 40–60 form a helical; Signal-anchor for type II membrane protein membrane-spanning segment; that stretch reads LLIWGVFGVTLGLMAGYYLWG. Residues 61-317 are Lumenal-facing; the sequence is ELITDDSVTE…EHAIGDPTWT (257 aa). 2 N-linked (GlcNAc...) asparagine glycosylation sites follow: Asn195 and Asn213. The 103-residue stretch at 205–307 folds into the Fe2OG dioxygenase domain; the sequence is KPTFFSRMNS…AITISFTCNP (103 aa). The Fe cation site is built by His228 and Asp230. A glycan (N-linked (GlcNAc...) asparagine) is linked at Asn265. His286 serves as a coordination point for Fe cation. The active site involves Arg296. Arg296 is a binding site for 2-oxoglutarate.

It belongs to the OGFOD3 family. Requires Fe(2+) as cofactor. L-ascorbate is required as a cofactor.

The protein localises to the membrane. The sequence is that of 2-oxoglutarate and iron-dependent oxygenase domain-containing protein 3 (ogfod3) from Xenopus tropicalis (Western clawed frog).